Consider the following 91-residue polypeptide: Large ribosomal subunit protein uL23 (91 aa).

The protein belongs to the universal ribosomal protein uL23 family. As to quaternary structure, part of the 50S ribosomal subunit. Contacts protein L29, and trigger factor when it is bound to the ribosome.

In terms of biological role, one of the early assembly proteins it binds 23S rRNA. One of the proteins that surrounds the polypeptide exit tunnel on the outside of the ribosome. Forms the main docking site for trigger factor binding to the ribosome. The protein is Large ribosomal subunit protein uL23 of Staphylococcus saprophyticus subsp. saprophyticus (strain ATCC 15305 / DSM 20229 / NCIMB 8711 / NCTC 7292 / S-41).